The chain runs to 532 residues: Putative L-lactate permease (532 aa).

14 consecutive transmembrane segments (helical) span residues 23 to 43 (ALPSYVALPWVATLVMGVHLL), 56 to 76 (VVSAIIAVQTPITVIFGAILF), 101 to 121 (VAQLMIIGWAFAFMIEGASGF), 129 to 149 (APILVGLGFHPLKVAMLALIM), 152 to 172 (VPVSFGAVGTPTWFGFGALKL), 180 to 200 (IGSITAFIHSIAALIIPLLAL), 213 to 233 (IVFIYISVLGCVVPYFLIAQV), 234 to 254 (NYEFPSLVGGAIGLFISVWAA), 274 to 294 (AGEVVKALFPTGLLIAFLIVT), 346 to 366 (LLYVPALIPFVITVLIAIPFF), 387 to 407 (PFIALIGALVMVNLMLVGGEH), 420 to 440 (ISGSNWTIFSSFLGAIGSFFS), 462 to 482 (GISVALVLALQSVGGAMGNMV), and 508 to 528 (IIPMIIYGIIAALGALFLVPL).

This sequence belongs to the lactate permease family.

It is found in the cell inner membrane. Functionally, may play a role in L-lactate transport. This is Putative L-lactate permease from Haemophilus influenzae (strain ATCC 51907 / DSM 11121 / KW20 / Rd).